Consider the following 589-residue polypeptide: Ufm1-specific protease (589 aa).

Residues 1-22 (MTNSQTVSLIGPTQMAPQSTPP) are disordered. Active-site residues include C421, D545, and H547.

Belongs to the peptidase C78 family. In terms of assembly, interacts with odr-4. Expressed in head and tail neurons. Expressed in the amphid head neurons ADL, ASI, ASH, ASJ, ASG, ADF, ASK, AWA, AWB, AWC, and in two tail neurons, the phasmid tail neurons PHA and PHB.

It localises to the endoplasmic reticulum membrane. The protein resides in the cytoplasm. The protein localises to the perinuclear region. Its function is as follows. Thiol protease which recognizes and hydrolyzes the peptide bond at the C-terminal Gly of ufm-1, a ubiquitin-like modifier protein bound to a number of target proteins. Required, with oct-4, for the localization of a subset of 7 transmembrane domain odorant receptors, including odr-10, to the cilia of olfactory neurons AWA and AWC. Operates in aggregation behavior, and responses to oxygen levels. The sequence is that of Ufm1-specific protease from Caenorhabditis elegans.